A 205-amino-acid polypeptide reads, in one-letter code: E3 ubiquitin-protein ligase complex slx8-rfp subunit rfp2 (205 aa).

The segment at 147–190 adopts an RING-type; degenerate zinc-finger fold; the sequence is CAKCGNELVSDEKKSIFAAKCGHLFCSTCAKELRKKTVPCPVQH.

In terms of assembly, part of an E3 ubiquitin complex including rfp1, rfp2 and slx8. Interacts with slx8.

It is found in the nucleus. The enzyme catalyses S-ubiquitinyl-[E2 ubiquitin-conjugating enzyme]-L-cysteine + [acceptor protein]-L-lysine = [E2 ubiquitin-conjugating enzyme]-L-cysteine + N(6)-ubiquitinyl-[acceptor protein]-L-lysine.. It functions in the pathway protein modification; protein ubiquitination. Mediates ubiquitination and subsequent desumoylation/degradation of sumoylated proteins and proteins containing SUMO-like domains. Involved in maintaining genome stability where it acts in the cellular response to DNA damage. The protein is E3 ubiquitin-protein ligase complex slx8-rfp subunit rfp2 (rfp2) of Schizosaccharomyces pombe (strain 972 / ATCC 24843) (Fission yeast).